A 65-amino-acid chain; its full sequence is Large ribosomal subunit protein eL24 (65 aa).

Residues Cys-6, Cys-9, Cys-32, and Cys-36 each coordinate Zn(2+). The C4-type zinc finger occupies 6–36 (CAFCGADIPPGYGIMYVKSDGTVLRYCSRKC).

Belongs to the eukaryotic ribosomal protein eL24 family. As to quaternary structure, part of the 50S ribosomal subunit. Forms a cluster with proteins L3 and L14. It depends on Zn(2+) as a cofactor.

Functionally, binds to the 23S rRNA. The protein is Large ribosomal subunit protein eL24 of Pyrobaculum arsenaticum (strain DSM 13514 / JCM 11321 / PZ6).